The chain runs to 32 residues: Photosystem I reaction center subunit XII (32 aa).

A helical membrane pass occupies residues 10 to 27 (VVALISALVTGILALRLG).

The protein belongs to the PsaM family.

The protein localises to the plastid. The protein resides in the chloroplast thylakoid membrane. This Zygnema circumcarinatum (Green alga) protein is Photosystem I reaction center subunit XII.